Reading from the N-terminus, the 350-residue chain is Galactokinase (350 aa).

14 to 17 (EHTD) contributes to the substrate binding site. ATP contacts are provided by residues serine 46 and 96–102 (GAGLSSS). Residues serine 102 and glutamate 134 each contribute to the Mg(2+) site. The active-site Proton acceptor is aspartate 146. Substrate is bound at residue tyrosine 196.

It belongs to the GHMP kinase family. GalK subfamily.

Its subcellular location is the cytoplasm. It carries out the reaction alpha-D-galactose + ATP = alpha-D-galactose 1-phosphate + ADP + H(+). Its pathway is carbohydrate metabolism; galactose metabolism. Its function is as follows. Catalyzes the transfer of the gamma-phosphate of ATP to D-galactose to form alpha-D-galactose-1-phosphate (Gal-1-P). This Thermotoga neapolitana protein is Galactokinase.